The primary structure comprises 453 residues: Bifunctional protein GlmU (453 aa).

The pyrophosphorylase stretch occupies residues methionine 1–arginine 226. Residues leucine 8 to glycine 11, lysine 22, glutamine 73, glycine 78 to threonine 79, tyrosine 99 to aspartate 101, glycine 136, glutamate 151, asparagine 166, and asparagine 224 each bind UDP-N-acetyl-alpha-D-glucosamine. Aspartate 101 is a Mg(2+) binding site. Mg(2+) is bound at residue asparagine 224. The interval serine 227–glutamate 247 is linker. The interval glycine 248–serine 453 is N-acetyltransferase. 2 residues coordinate UDP-N-acetyl-alpha-D-glucosamine: arginine 330 and lysine 348. The active-site Proton acceptor is histidine 360. UDP-N-acetyl-alpha-D-glucosamine contacts are provided by tyrosine 363 and asparagine 374. Residues alanine 377, asparagine 383–tyrosine 384, serine 402, alanine 420, and arginine 437 each bind acetyl-CoA.

It in the N-terminal section; belongs to the N-acetylglucosamine-1-phosphate uridyltransferase family. In the C-terminal section; belongs to the transferase hexapeptide repeat family. Homotrimer. Mg(2+) serves as cofactor.

Its subcellular location is the cytoplasm. The enzyme catalyses alpha-D-glucosamine 1-phosphate + acetyl-CoA = N-acetyl-alpha-D-glucosamine 1-phosphate + CoA + H(+). The catalysed reaction is N-acetyl-alpha-D-glucosamine 1-phosphate + UTP + H(+) = UDP-N-acetyl-alpha-D-glucosamine + diphosphate. The protein operates within nucleotide-sugar biosynthesis; UDP-N-acetyl-alpha-D-glucosamine biosynthesis; N-acetyl-alpha-D-glucosamine 1-phosphate from alpha-D-glucosamine 6-phosphate (route II): step 2/2. It functions in the pathway nucleotide-sugar biosynthesis; UDP-N-acetyl-alpha-D-glucosamine biosynthesis; UDP-N-acetyl-alpha-D-glucosamine from N-acetyl-alpha-D-glucosamine 1-phosphate: step 1/1. It participates in bacterial outer membrane biogenesis; LPS lipid A biosynthesis. Functionally, catalyzes the last two sequential reactions in the de novo biosynthetic pathway for UDP-N-acetylglucosamine (UDP-GlcNAc). The C-terminal domain catalyzes the transfer of acetyl group from acetyl coenzyme A to glucosamine-1-phosphate (GlcN-1-P) to produce N-acetylglucosamine-1-phosphate (GlcNAc-1-P), which is converted into UDP-GlcNAc by the transfer of uridine 5-monophosphate (from uridine 5-triphosphate), a reaction catalyzed by the N-terminal domain. The sequence is that of Bifunctional protein GlmU from Chromohalobacter salexigens (strain ATCC BAA-138 / DSM 3043 / CIP 106854 / NCIMB 13768 / 1H11).